Here is a 776-residue protein sequence, read N- to C-terminus: Isoamylase (776 aa).

The first 26 residues, 1 to 26, serve as a signal peptide directing secretion; that stretch reads MKCPKILAALLGCAVLAGVPAMPAHA. Ca(2+) contacts are provided by D154, E255, T256, N258, and D285. Catalysis depends on D401, which acts as the Nucleophile. C410 and C422 are joined by a disulfide. Catalysis depends on E461, which acts as the Proton donor. Cystine bridges form between C546-C616 and C738-C766.

This sequence belongs to the glycosyl hydrolase 13 family. As to quaternary structure, monomer. Requires Ca(2+) as cofactor.

Its subcellular location is the secreted. The enzyme catalyses Hydrolysis of (1-&gt;6)-alpha-D-glucosidic branch linkages in glycogen, amylopectin and their beta-limit dextrins.. The chain is Isoamylase (iam) from Pseudomonas amyloderamosa.